Consider the following 359-residue polypeptide: MTSTLFFKPRPSSTLAEIAALTKAELVDPSQGDRVISGIASLDEAGPMHLGFFENIKYVAELEQTHAGACLVTQRYETRVPPHVAVLRVKSPVQAFVAYARHIHEDAMRPMSGFGGTGIAPSAVIHPSARLEDGVIVDPLAVIGPDVEIGAGSVIGAGAVIASGVKIGRDCNVGANTTIQFSLIGNNVLIHPGCHIGQDGFRFIFARTHQKVPQVGRVIIQNDVEIGSGTTVDRGGLRDTVIGEGTKIDNQVQVGHNVTIGRHCVIAAQCGLAGSLTLGDNVALGAKVGINNHVMIGDGAQITAMSAVKDSVPAGERWGGYFAKPTKQWFREIIAVERLMRGGAGAAPKADDGKDEDRG.

H256 functions as the Proton acceptor in the catalytic mechanism.

This sequence belongs to the transferase hexapeptide repeat family. LpxD subfamily. As to quaternary structure, homotrimer.

It carries out the reaction a UDP-3-O-[(3R)-3-hydroxyacyl]-alpha-D-glucosamine + a (3R)-hydroxyacyl-[ACP] = a UDP-2-N,3-O-bis[(3R)-3-hydroxyacyl]-alpha-D-glucosamine + holo-[ACP] + H(+). The protein operates within bacterial outer membrane biogenesis; LPS lipid A biosynthesis. Functionally, catalyzes the N-acylation of UDP-3-O-acylglucosamine using 3-hydroxyacyl-ACP as the acyl donor. Is involved in the biosynthesis of lipid A, a phosphorylated glycolipid that anchors the lipopolysaccharide to the outer membrane of the cell. The chain is UDP-3-O-acylglucosamine N-acyltransferase from Rhodopseudomonas palustris (strain HaA2).